Consider the following 329-residue polypeptide: Phosphate acyltransferase (329 aa).

Belongs to the PlsX family. Homodimer. Probably interacts with PlsY.

It is found in the cytoplasm. It catalyses the reaction a fatty acyl-[ACP] + phosphate = an acyl phosphate + holo-[ACP]. It functions in the pathway lipid metabolism; phospholipid metabolism. In terms of biological role, catalyzes the reversible formation of acyl-phosphate (acyl-PO(4)) from acyl-[acyl-carrier-protein] (acyl-ACP). This enzyme utilizes acyl-ACP as fatty acyl donor, but not acyl-CoA. The sequence is that of Phosphate acyltransferase from Shouchella clausii (strain KSM-K16) (Alkalihalobacillus clausii).